The primary structure comprises 213 residues: Imidazole glycerol phosphate synthase subunit HisH 2 (213 aa).

The region spanning 4–211 (RLGLIDYGMG…LNWLETGAKP (208 aa)) is the Glutamine amidotransferase type-1 domain. The active-site Nucleophile is the C82. Active-site residues include H186 and E188.

Heterodimer of HisH and HisF.

It is found in the cytoplasm. The enzyme catalyses 5-[(5-phospho-1-deoxy-D-ribulos-1-ylimino)methylamino]-1-(5-phospho-beta-D-ribosyl)imidazole-4-carboxamide + L-glutamine = D-erythro-1-(imidazol-4-yl)glycerol 3-phosphate + 5-amino-1-(5-phospho-beta-D-ribosyl)imidazole-4-carboxamide + L-glutamate + H(+). The catalysed reaction is L-glutamine + H2O = L-glutamate + NH4(+). It participates in amino-acid biosynthesis; L-histidine biosynthesis; L-histidine from 5-phospho-alpha-D-ribose 1-diphosphate: step 5/9. In terms of biological role, IGPS catalyzes the conversion of PRFAR and glutamine to IGP, AICAR and glutamate. The HisH subunit provides the glutamine amidotransferase activity that produces the ammonia necessary to HisF for the synthesis of IGP and AICAR. The polypeptide is Imidazole glycerol phosphate synthase subunit HisH 2 (hisH2) (Prochlorococcus marinus (strain MIT 9313)).